The chain runs to 113 residues: Putative hemolysin E-like protein (113 aa).

The protein belongs to the hemolysin E family.

The protein is Putative hemolysin E-like protein of Shigella flexneri.